Reading from the N-terminus, the 292-residue chain is Protein/nucleic acid deglycase HchA (292 aa).

The segment covering 1 to 12 (MSQDVNELSKQP) has biased composition (polar residues). Positions 1–23 (MSQDVNELSKQPTPDKAEDNAFF) are disordered. Residue Cys-190 is the Nucleophile of the active site.

This sequence belongs to the peptidase C56 family. HchA subfamily.

It is found in the cytoplasm. The catalysed reaction is N(omega)-(1-hydroxy-2-oxopropyl)-L-arginyl-[protein] + H2O = lactate + L-arginyl-[protein] + H(+). It catalyses the reaction N(6)-(1-hydroxy-2-oxopropyl)-L-lysyl-[protein] + H2O = lactate + L-lysyl-[protein] + H(+). The enzyme catalyses S-(1-hydroxy-2-oxopropyl)-L-cysteinyl-[protein] + H2O = lactate + L-cysteinyl-[protein] + H(+). It carries out the reaction N(omega)-(1-hydroxy-2-oxoethyl)-L-arginyl-[protein] + H2O = L-arginyl-[protein] + glycolate + H(+). The catalysed reaction is N(6)-(1-hydroxy-2-oxoethyl)-L-lysyl-[protein] + H2O = glycolate + L-lysyl-[protein] + H(+). It catalyses the reaction S-(1-hydroxy-2-oxoethyl)-L-cysteinyl-[protein] + H2O = glycolate + L-cysteinyl-[protein] + H(+). The enzyme catalyses N(2)-(1-hydroxy-2-oxopropyl)-dGTP + H2O = lactate + dGTP + H(+). It carries out the reaction N(2)-(1-hydroxy-2-oxopropyl)-GTP + H2O = lactate + GTP + H(+). The catalysed reaction is N(2)-(1-hydroxy-2-oxopropyl)-GDP + H2O = lactate + GDP + H(+). It catalyses the reaction N(2)-(1-hydroxy-2-oxopropyl)-GMP + H2O = lactate + GMP + H(+). The enzyme catalyses N(2)-(1-hydroxy-2-oxoethyl)-dGTP + H2O = dGTP + glycolate + H(+). It carries out the reaction N(2)-(1-hydroxy-2-oxoethyl)-GTP + H2O = glycolate + GTP + H(+). The catalysed reaction is N(2)-(1-hydroxy-2-oxoethyl)-GDP + H2O = glycolate + GDP + H(+). It catalyses the reaction N(2)-(1-hydroxy-2-oxoethyl)-GMP + H2O = glycolate + GMP + H(+). The enzyme catalyses an N(2)-(1-hydroxy-2-oxopropyl)-guanosine in RNA + H2O = a guanosine in RNA + lactate + H(+). It carries out the reaction an N(2)-(1-hydroxy-2-oxopropyl)-2'-deoxyguanosine in DNA + H2O = a 2'-deoxyguanosine in DNA + lactate + H(+). The catalysed reaction is an N(2)-(1-hydroxy-2-oxoethyl)-guanosine in RNA + H2O = a guanosine in RNA + glycolate + H(+). It catalyses the reaction an N(2)-(1-hydroxy-2-oxoethyl)-2'-deoxyguanosine in DNA + H2O = a 2'-deoxyguanosine in DNA + glycolate + H(+). Its function is as follows. Protein and nucleotide deglycase that catalyzes the deglycation of the Maillard adducts formed between amino groups of proteins or nucleotides and reactive carbonyl groups of glyoxals. Thus, functions as a protein deglycase that repairs methylglyoxal- and glyoxal-glycated proteins, and releases repaired proteins and lactate or glycolate, respectively. Deglycates cysteine, arginine and lysine residues in proteins, and thus reactivates these proteins by reversing glycation by glyoxals. Acts on early glycation intermediates (hemithioacetals and aminocarbinols), preventing the formation of Schiff bases and advanced glycation endproducts (AGE). Also functions as a nucleotide deglycase able to repair glycated guanine in the free nucleotide pool (GTP, GDP, GMP, dGTP) and in DNA and RNA. Is thus involved in a major nucleotide repair system named guanine glycation repair (GG repair), dedicated to reversing methylglyoxal and glyoxal damage via nucleotide sanitization and direct nucleic acid repair. Plays an important role in protecting cells from carbonyl stress. The protein is Protein/nucleic acid deglycase HchA of Staphylococcus aureus (strain Newman).